A 919-amino-acid polypeptide reads, in one-letter code: Isoleucine--tRNA ligase (919 aa).

The 'HIGH' region motif lies at 57–67 (PYANGHTHIGH). Glu569 serves as a coordination point for L-isoleucyl-5'-AMP. The 'KMSKS' region signature appears at 610-614 (KMSKS). Lys613 provides a ligand contact to ATP. Cys895, Cys898, Cys910, and Cys913 together coordinate Zn(2+).

Belongs to the class-I aminoacyl-tRNA synthetase family. IleS type 1 subfamily. As to quaternary structure, monomer. Zn(2+) is required as a cofactor.

The protein resides in the cytoplasm. The enzyme catalyses tRNA(Ile) + L-isoleucine + ATP = L-isoleucyl-tRNA(Ile) + AMP + diphosphate. Functionally, catalyzes the attachment of isoleucine to tRNA(Ile). As IleRS can inadvertently accommodate and process structurally similar amino acids such as valine, to avoid such errors it has two additional distinct tRNA(Ile)-dependent editing activities. One activity is designated as 'pretransfer' editing and involves the hydrolysis of activated Val-AMP. The other activity is designated 'posttransfer' editing and involves deacylation of mischarged Val-tRNA(Ile). This chain is Isoleucine--tRNA ligase, found in Sulfurimonas denitrificans (strain ATCC 33889 / DSM 1251) (Thiomicrospira denitrificans (strain ATCC 33889 / DSM 1251)).